The sequence spans 412 residues: Gamma-glutamyl phosphate reductase (412 aa).

It belongs to the gamma-glutamyl phosphate reductase family.

It localises to the cytoplasm. The catalysed reaction is L-glutamate 5-semialdehyde + phosphate + NADP(+) = L-glutamyl 5-phosphate + NADPH + H(+). The protein operates within amino-acid biosynthesis; L-proline biosynthesis; L-glutamate 5-semialdehyde from L-glutamate: step 2/2. Its function is as follows. Catalyzes the NADPH-dependent reduction of L-glutamate 5-phosphate into L-glutamate 5-semialdehyde and phosphate. The product spontaneously undergoes cyclization to form 1-pyrroline-5-carboxylate. This Streptococcus suis (strain 98HAH33) protein is Gamma-glutamyl phosphate reductase.